The sequence spans 204 residues: Superoxide dismutase [Mn] (204 aa).

The Mn(2+) site is built by histidine 29, histidine 84, aspartate 167, and histidine 171.

The protein belongs to the iron/manganese superoxide dismutase family. In terms of assembly, homotetramer. It depends on Mn(2+) as a cofactor.

The catalysed reaction is 2 superoxide + 2 H(+) = H2O2 + O2. Its function is as follows. Destroys superoxide anion radicals which are normally produced within the cells and which are toxic to biological systems. This chain is Superoxide dismutase [Mn] (sodA), found in Thermus thermophilus (strain ATCC BAA-163 / DSM 7039 / HB27).